Reading from the N-terminus, the 150-residue chain is Endoribonuclease YbeY (150 aa).

Zn(2+) is bound by residues histidine 112, histidine 116, and histidine 122.

It belongs to the endoribonuclease YbeY family. Requires Zn(2+) as cofactor.

The protein localises to the cytoplasm. Functionally, single strand-specific metallo-endoribonuclease involved in late-stage 70S ribosome quality control and in maturation of the 3' terminus of the 16S rRNA. This chain is Endoribonuclease YbeY, found in Bdellovibrio bacteriovorus (strain ATCC 15356 / DSM 50701 / NCIMB 9529 / HD100).